Consider the following 101-residue polypeptide: uncharacterized protein (101 aa).

The protein localises to the mitochondrion. This is an uncharacterized protein from Arabidopsis thaliana (Mouse-ear cress).